Consider the following 493-residue polypeptide: Argininosuccinate lyase (493 aa).

Belongs to the lyase 1 family. Argininosuccinate lyase subfamily.

The protein resides in the cytoplasm. It catalyses the reaction 2-(N(omega)-L-arginino)succinate = fumarate + L-arginine. It functions in the pathway amino-acid biosynthesis; L-arginine biosynthesis; L-arginine from L-ornithine and carbamoyl phosphate: step 3/3. The protein is Argininosuccinate lyase of Methanospirillum hungatei JF-1 (strain ATCC 27890 / DSM 864 / NBRC 100397 / JF-1).